The sequence spans 474 residues: tRNA-2-methylthio-N(6)-dimethylallyladenosine synthase (474 aa).

The MTTase N-terminal domain maps to 3–120 (KKLHIKTWGC…LPEMINSVRG (118 aa)). [4Fe-4S] cluster contacts are provided by Cys12, Cys49, Cys83, Cys157, Cys161, and Cys164. In terms of domain architecture, Radical SAM core spans 143–375 (RAEGPTAFVS…QERINQQAMA (233 aa)). The 64-residue stretch at 378 to 441 (RRMLGTTQRI…PNSLRGKVVR (64 aa)) folds into the TRAM domain.

This sequence belongs to the methylthiotransferase family. MiaB subfamily. Monomer. [4Fe-4S] cluster serves as cofactor.

Its subcellular location is the cytoplasm. The enzyme catalyses N(6)-dimethylallyladenosine(37) in tRNA + (sulfur carrier)-SH + AH2 + 2 S-adenosyl-L-methionine = 2-methylsulfanyl-N(6)-dimethylallyladenosine(37) in tRNA + (sulfur carrier)-H + 5'-deoxyadenosine + L-methionine + A + S-adenosyl-L-homocysteine + 2 H(+). Catalyzes the methylthiolation of N6-(dimethylallyl)adenosine (i(6)A), leading to the formation of 2-methylthio-N6-(dimethylallyl)adenosine (ms(2)i(6)A) at position 37 in tRNAs that read codons beginning with uridine. The protein is tRNA-2-methylthio-N(6)-dimethylallyladenosine synthase of Shigella boydii serotype 18 (strain CDC 3083-94 / BS512).